The primary structure comprises 308 residues: Aspartate carbamoyltransferase catalytic subunit (308 aa).

Residues arginine 59 and threonine 60 each contribute to the carbamoyl phosphate site. Position 87 (lysine 87) interacts with L-aspartate. The carbamoyl phosphate site is built by arginine 109, histidine 137, and glutamine 140. L-aspartate-binding residues include arginine 173 and arginine 224. Carbamoyl phosphate contacts are provided by glycine 267 and proline 268.

Belongs to the aspartate/ornithine carbamoyltransferase superfamily. ATCase family. Heterododecamer (2C3:3R2) of six catalytic PyrB chains organized as two trimers (C3), and six regulatory PyrI chains organized as three dimers (R2).

It carries out the reaction carbamoyl phosphate + L-aspartate = N-carbamoyl-L-aspartate + phosphate + H(+). Its pathway is pyrimidine metabolism; UMP biosynthesis via de novo pathway; (S)-dihydroorotate from bicarbonate: step 2/3. Functionally, catalyzes the condensation of carbamoyl phosphate and aspartate to form carbamoyl aspartate and inorganic phosphate, the committed step in the de novo pyrimidine nucleotide biosynthesis pathway. This is Aspartate carbamoyltransferase catalytic subunit from Helicobacter acinonychis (strain Sheeba).